The primary structure comprises 253 residues: Neurotrophin-3 (253 aa).

The signal sequence occupies residues methionine 1–glycine 18. The propeptide occupies asparagine 19–arginine 134. Residues threonine 62 to leucine 89 form a disordered region. Residue asparagine 127 is glycosylated (N-linked (GlcNAc...) asparagine). Disulfide bonds link cysteine 148-cysteine 213, cysteine 191-cysteine 242, and cysteine 201-cysteine 244.

The protein belongs to the NGF-beta family.

The protein resides in the secreted. In terms of biological role, seems to promote the survival of visceral and proprioceptive sensory neurons. The chain is Neurotrophin-3 (NTF3) from Bos taurus (Bovine).